Here is a 418-residue protein sequence, read N- to C-terminus: Putative ion-transport protein YfeO (418 aa).

12 consecutive transmembrane segments (helical) span residues 10-30 (LLLS…LIVV), 54-74 (DSPI…GLVI), 99-119 (ALPG…SLGP), 120-140 (EHPI…RLLP), 149-169 (ILAS…AALI), 186-206 (LFAP…FFHP), 223-243 (ILSG…AVWC), 258-278 (VLVL…GGPV), 300-320 (DYFL…ASGF), 322-342 (GGRI…LHEH), 343-363 (VPAV…VLVV), and 371-391 (LFMA…CIVM).

This sequence belongs to the chloride channel (TC 2.A.49) family.

Its subcellular location is the cell membrane. The polypeptide is Putative ion-transport protein YfeO (Shigella sonnei (strain Ss046)).